Here is a 534-residue protein sequence, read N- to C-terminus: Importin subunit alpha-1b (534 aa).

In terms of domain architecture, IBB spans 1 to 58; sequence MSLRPSERAEVRRSRYKVAVDADEGRRRREDNMVEIRKSRREESLLKKRRDGLPAAAA. 8 ARM repeats span residues 111 to 151, 154 to 193, 196 to 236, 238 to 277, 280 to 319, 322 to 362, 365 to 404, and 408 to 447; these read SPPI…NIAS, SDNT…NVAG, PKCR…NFCR, KPQP…YLSD, NDKI…NIVT, DMQT…NITA, REQI…NATS, and HDQI…NILK. Residues 505–534 form a disordered region; it reads DAMPSGDNAQNGFNFGNQQPNVPSGGFNFG. Positions 514-523 are enriched in low complexity; sequence QNGFNFGNQQ.

It belongs to the importin alpha family. As to quaternary structure, forms a complex with importin subunit beta-1. The whole complex, most stable and composed of importin alpha and importin beta, is referred to as PTAC or pore targeting complex. Highly expressed in root and weakly in callus, etiolated leaf and green leaf.

The protein localises to the cytoplasm. It is found in the perinuclear region. In terms of biological role, functions in nuclear protein import. Binds specifically and directly to substrates containing either a simple or bipartite NLS motif. Promotes docking of import substrates to the nuclear envelope. In conjunction with importin beta-1, mediates the nuclear envelope docking, and the subsequent translocation into the nucleus of the constitutive morphogenetic 1 (COP1) protein containing bipartite NLS motif. The chain is Importin subunit alpha-1b from Oryza sativa subsp. japonica (Rice).